We begin with the raw amino-acid sequence, 571 residues long: Proline--tRNA ligase (571 aa).

This sequence belongs to the class-II aminoacyl-tRNA synthetase family. ProS type 1 subfamily. As to quaternary structure, homodimer.

Its subcellular location is the cytoplasm. The enzyme catalyses tRNA(Pro) + L-proline + ATP = L-prolyl-tRNA(Pro) + AMP + diphosphate. Its function is as follows. Catalyzes the attachment of proline to tRNA(Pro) in a two-step reaction: proline is first activated by ATP to form Pro-AMP and then transferred to the acceptor end of tRNA(Pro). As ProRS can inadvertently accommodate and process non-cognate amino acids such as alanine and cysteine, to avoid such errors it has two additional distinct editing activities against alanine. One activity is designated as 'pretransfer' editing and involves the tRNA(Pro)-independent hydrolysis of activated Ala-AMP. The other activity is designated 'posttransfer' editing and involves deacylation of mischarged Ala-tRNA(Pro). The misacylated Cys-tRNA(Pro) is not edited by ProRS. The protein is Proline--tRNA ligase of Mannheimia succiniciproducens (strain KCTC 0769BP / MBEL55E).